A 55-amino-acid chain; its full sequence is Small ribosomal subunit protein eS31 (55 aa).

The Zn(2+) site is built by C27, C30, C45, and C48. A C4-type zinc finger spans residues 27-48; sequence CSRCGKGFFMAQHKDRRSCGKC.

It belongs to the eukaryotic ribosomal protein eS31 family. Part of the 30S ribosomal subunit. Requires Zn(2+) as cofactor.

This is Small ribosomal subunit protein eS31 from Cenarchaeum symbiosum (strain A).